A 20-amino-acid chain; its full sequence is Phosphoglycerate kinase (20 aa).

A disordered region spans residues Met-1–Val-20.

It belongs to the phosphoglycerate kinase family. In terms of assembly, monomer.

The protein resides in the cytoplasm. It carries out the reaction (2R)-3-phosphoglycerate + ATP = (2R)-3-phospho-glyceroyl phosphate + ADP. It functions in the pathway carbohydrate degradation; glycolysis; pyruvate from D-glyceraldehyde 3-phosphate: step 2/5. In Bacillus cereus, this protein is Phosphoglycerate kinase.